The chain runs to 218 residues: Small ribosomal subunit protein uS3c (218 aa).

A KH type-2 domain is found at 47-118; that stretch reads VQKHMRVSSG…RLNIAITRVA (72 aa).

The protein belongs to the universal ribosomal protein uS3 family. Part of the 30S ribosomal subunit.

Its subcellular location is the plastid. The protein resides in the chloroplast. The polypeptide is Small ribosomal subunit protein uS3c (rps3) (Illicium oligandrum (Star anise)).